The chain runs to 244 residues: HTH-type transcriptional regulator Cmr (244 aa).

41 to 160 lines the a nucleoside 3',5'-cyclic phosphate pocket; sequence GSAPLHRDDV…RRWLSSVAQR (120 aa). One can recognise an HTH crp-type domain in the interval 174–237; that stretch reads RPLPAQVAQL…YAVIEITDQH (64 aa). A DNA-binding region (H-T-H motif) is located at residues 197-216; sequence QRTLAAMLGAQRPSINKILK.

Positively regulates the expression of at least groEL2. The chain is HTH-type transcriptional regulator Cmr (cmr) from Mycobacterium tuberculosis (strain CDC 1551 / Oshkosh).